Consider the following 87-residue polypeptide: Homeotic protein ultrabithorax (87 aa).

The short motif at 22–27 (FYPWMA) is the Antp-type hexapeptide element.

This sequence belongs to the Antp homeobox family. As to expression, in the embryo, expression is seen in the epidermis, somatic and visceral mesoderm, and the peripheral and central nervous system.

The protein resides in the nucleus. Functionally, sequence-specific transcription factor which is part of a developmental regulatory system that provides cells with specific positional identities on the anterior-posterior axis. Binds the consensus region 5'-TTAAT[GT][GA]-3'. This homeotic protein controls development of the cells in the posterior thoracic and first abdominal segments. It activates the synthesis of the decapentaplegic (DPP) growth factor. This is Homeotic protein ultrabithorax (Ubx) from Drosophila hydei (Fruit fly).